The following is a 96-amino-acid chain: uncharacterized protein (96 aa).

Residues 1–21 traverse the membrane as a helical segment; it reads MSDFEIIVGISSLLQVIILNI.

Its subcellular location is the membrane. This is an uncharacterized protein from Saccharomyces cerevisiae (strain ATCC 204508 / S288c) (Baker's yeast).